Consider the following 195-residue polypeptide: Imidazoleglycerol-phosphate dehydratase (195 aa).

Belongs to the imidazoleglycerol-phosphate dehydratase family.

The protein localises to the cytoplasm. The enzyme catalyses D-erythro-1-(imidazol-4-yl)glycerol 3-phosphate = 3-(imidazol-4-yl)-2-oxopropyl phosphate + H2O. It participates in amino-acid biosynthesis; L-histidine biosynthesis; L-histidine from 5-phospho-alpha-D-ribose 1-diphosphate: step 6/9. The polypeptide is Imidazoleglycerol-phosphate dehydratase (Burkholderia pseudomallei (strain 1710b)).